The following is a 429-amino-acid chain: GTPase Obg (429 aa).

Positions 1 to 158 (MFVDQVKIYV…RNVQLELKVL (158 aa)) constitute an Obg domain. Residues 124-145 (RGNKRFATPANPAPELSENGEP) are disordered. One can recognise an OBG-type G domain in the interval 159 to 329 (ADVGLVGFPS…LLLAIADKLE (171 aa)). GTP contacts are provided by residues 165–172 (GFPSVGKS), 190–194 (FTTIV), 212–215 (DLPG), 282–285 (NKMD), and 310–312 (SAV). The Mg(2+) site is built by Ser172 and Thr192. One can recognise an OCT domain in the interval 351–429 (KYVADEPDFE…LLDYEFEFMD (79 aa)).

It belongs to the TRAFAC class OBG-HflX-like GTPase superfamily. OBG GTPase family. Monomer. Mg(2+) is required as a cofactor.

It localises to the cytoplasm. Functionally, an essential GTPase which binds GTP, GDP and possibly (p)ppGpp with moderate affinity, with high nucleotide exchange rates and a fairly low GTP hydrolysis rate. Plays a role in control of the cell cycle, stress response, ribosome biogenesis and in those bacteria that undergo differentiation, in morphogenesis control. The chain is GTPase Obg from Listeria monocytogenes serotype 4a (strain HCC23).